A 284-amino-acid polypeptide reads, in one-letter code: Bifunctional protein FolD (284 aa).

NADP(+)-binding positions include 165 to 167 (GRS), Ser190, and Ile231.

This sequence belongs to the tetrahydrofolate dehydrogenase/cyclohydrolase family. As to quaternary structure, homodimer.

It catalyses the reaction (6R)-5,10-methylene-5,6,7,8-tetrahydrofolate + NADP(+) = (6R)-5,10-methenyltetrahydrofolate + NADPH. The enzyme catalyses (6R)-5,10-methenyltetrahydrofolate + H2O = (6R)-10-formyltetrahydrofolate + H(+). Its pathway is one-carbon metabolism; tetrahydrofolate interconversion. In terms of biological role, catalyzes the oxidation of 5,10-methylenetetrahydrofolate to 5,10-methenyltetrahydrofolate and then the hydrolysis of 5,10-methenyltetrahydrofolate to 10-formyltetrahydrofolate. In Streptococcus thermophilus (strain ATCC BAA-491 / LMD-9), this protein is Bifunctional protein FolD.